The primary structure comprises 456 residues: UDP-N-acetylglucosamine 1-carboxyvinyltransferase (456 aa).

Residue 34 to 35 coordinates phosphoenolpyruvate; the sequence is KN. Arg104 serves as a coordination point for UDP-N-acetyl-alpha-D-glucosamine. Cys128 acts as the Proton donor in catalysis. Cys128 is subject to 2-(S-cysteinyl)pyruvic acid O-phosphothioketal. UDP-N-acetyl-alpha-D-glucosamine is bound by residues Asp319 and Ile341.

The protein belongs to the EPSP synthase family. MurA subfamily.

It localises to the cytoplasm. The catalysed reaction is phosphoenolpyruvate + UDP-N-acetyl-alpha-D-glucosamine = UDP-N-acetyl-3-O-(1-carboxyvinyl)-alpha-D-glucosamine + phosphate. It participates in cell wall biogenesis; peptidoglycan biosynthesis. Cell wall formation. Adds enolpyruvyl to UDP-N-acetylglucosamine. This is UDP-N-acetylglucosamine 1-carboxyvinyltransferase from Prochlorococcus marinus (strain AS9601).